Consider the following 260-residue polypeptide: MVNFCGKEFSSRLLIGSALYESPAIMQDAIRAAGAEIVTVSLRRETAGGKAGDVFWSLIRELGVTVLPNTAGCRTVREAVTTARLARELFGTSWIKLEVIGDNDTLQPDVVGLVEAATELVNDGFEVFPYCTEDLSVAMRLVDAGCKVVMPWAAPIGSARGITNRDALRLLRDRLPDITLVVDAGLGAPSHAAAALELGFDAVLLNTAIAKAADSVAMAGAFKLAVEAGRIAYESGLMDARDFASPSTPVIGTPFWHAVS.

K96 (schiff-base intermediate with DXP) is an active-site residue. Residues G157, 184 to 185, and 206 to 207 contribute to the 1-deoxy-D-xylulose 5-phosphate site; these read AG and NT.

It belongs to the ThiG family. Homotetramer. Forms heterodimers with either ThiH or ThiS.

It is found in the cytoplasm. The catalysed reaction is [ThiS sulfur-carrier protein]-C-terminal-Gly-aminoethanethioate + 2-iminoacetate + 1-deoxy-D-xylulose 5-phosphate = [ThiS sulfur-carrier protein]-C-terminal Gly-Gly + 2-[(2R,5Z)-2-carboxy-4-methylthiazol-5(2H)-ylidene]ethyl phosphate + 2 H2O + H(+). It functions in the pathway cofactor biosynthesis; thiamine diphosphate biosynthesis. Its function is as follows. Catalyzes the rearrangement of 1-deoxy-D-xylulose 5-phosphate (DXP) to produce the thiazole phosphate moiety of thiamine. Sulfur is provided by the thiocarboxylate moiety of the carrier protein ThiS. In vitro, sulfur can be provided by H(2)S. This Rhodopseudomonas palustris (strain BisB18) protein is Thiazole synthase.